We begin with the raw amino-acid sequence, 1001 residues long: Ribonuclease E/G-like protein, chloroplastic (1001 aa).

The N-terminal 48 residues, 1 to 48, are a transit peptide targeting the chloroplast; the sequence is MDVTEVPWRRLPQFSVSSRASWLVSSGFPLSSYMFSHVERGKTFRLTL. The region spanning 76-185 is the CBM20 domain; sequence SRLKGLCEVV…KIIIRDSWMS (110 aa). Aspartate 755 serves as a coordination point for Mg(2+). The stretch at 769 to 789 forms a coiled coil; that stretch reads QEKAILEVNLAAARQIAREIR. Residue aspartate 800 coordinates Mg(2+). Cysteine 858 and cysteine 861 together coordinate Zn(2+).

The protein belongs to the RNase E/G family. Part of a chloroplastic degradosome-like complex. Interacts with RHON1. A homotetramer formed by a dimer of dimers. Mg(2+) is required as a cofactor. It depends on Zn(2+) as a cofactor. In terms of tissue distribution, expressed in cotyledons, rosette and cauline leaves.

Its subcellular location is the plastid. It localises to the chloroplast stroma. Involved in intercistronic processing of primary transcripts from chloroplast operons. The endonucleolytic activity of the enzyme depends on the number of phosphates at the 5' end, is inhibited by structured RNA, and preferentially cleaves A/U-rich sequences. The chain is Ribonuclease E/G-like protein, chloroplastic (RNE) from Arabidopsis thaliana (Mouse-ear cress).